Here is a 431-residue protein sequence, read N- to C-terminus: GTPase Obg (431 aa).

The Obg domain occupies 1-158 (MFVDQVKISL…IEVTLELKLL (158 aa)). Residues 118 to 144 (KGGRGGRGNSRFASPRNPAPDFSENGE) form a disordered region. The OBG-type G domain occupies 159–330 (ADVGLVGFPS…LLYAIADKLE (172 aa)). GTP-binding positions include 165-172 (GFPSVGKS), 190-194 (FTTIK), 212-215 (DLPG), 282-285 (NKMD), and 311-313 (STF). Positions 172 and 192 each coordinate Mg(2+). The OCT domain occupies 353–431 (KHTPSQDKFT…ILGGEFEFVE (79 aa)).

The protein belongs to the TRAFAC class OBG-HflX-like GTPase superfamily. OBG GTPase family. In terms of assembly, monomer. Mg(2+) serves as cofactor.

It is found in the cytoplasm. In terms of biological role, an essential GTPase which binds GTP, GDP and possibly (p)ppGpp with moderate affinity, with high nucleotide exchange rates and a fairly low GTP hydrolysis rate. Plays a role in control of the cell cycle, stress response, ribosome biogenesis and in those bacteria that undergo differentiation, in morphogenesis control. This chain is GTPase Obg, found in Staphylococcus saprophyticus subsp. saprophyticus (strain ATCC 15305 / DSM 20229 / NCIMB 8711 / NCTC 7292 / S-41).